A 209-amino-acid chain; its full sequence is Imidazole glycerol phosphate synthase subunit HisH (209 aa).

In terms of domain architecture, Glutamine amidotransferase type-1 spans 1–205 (MIAIIDYGMG…QGVVEAWKSS (205 aa)). Residue Cys79 is the Nucleophile of the active site. Active-site residues include His180 and Glu182.

Heterodimer of HisH and HisF.

The protein localises to the cytoplasm. It catalyses the reaction 5-[(5-phospho-1-deoxy-D-ribulos-1-ylimino)methylamino]-1-(5-phospho-beta-D-ribosyl)imidazole-4-carboxamide + L-glutamine = D-erythro-1-(imidazol-4-yl)glycerol 3-phosphate + 5-amino-1-(5-phospho-beta-D-ribosyl)imidazole-4-carboxamide + L-glutamate + H(+). The catalysed reaction is L-glutamine + H2O = L-glutamate + NH4(+). It participates in amino-acid biosynthesis; L-histidine biosynthesis; L-histidine from 5-phospho-alpha-D-ribose 1-diphosphate: step 5/9. In terms of biological role, IGPS catalyzes the conversion of PRFAR and glutamine to IGP, AICAR and glutamate. The HisH subunit catalyzes the hydrolysis of glutamine to glutamate and ammonia as part of the synthesis of IGP and AICAR. The resulting ammonia molecule is channeled to the active site of HisF. The protein is Imidazole glycerol phosphate synthase subunit HisH of Bacillus cereus (strain B4264).